The chain runs to 499 residues: Glutamate--tRNA ligase (499 aa).

A 'HIGH' region motif is present at residues 12-22; the sequence is PSPTGHLHIGN. A 'KMSKS' region motif is present at residues 259–263; the sequence is KLSKR. Position 262 (Lys-262) interacts with ATP.

It belongs to the class-I aminoacyl-tRNA synthetase family. Glutamate--tRNA ligase type 1 subfamily. As to quaternary structure, monomer.

The protein resides in the cytoplasm. The enzyme catalyses tRNA(Glu) + L-glutamate + ATP = L-glutamyl-tRNA(Glu) + AMP + diphosphate. Its function is as follows. Catalyzes the attachment of glutamate to tRNA(Glu) in a two-step reaction: glutamate is first activated by ATP to form Glu-AMP and then transferred to the acceptor end of tRNA(Glu). This Lactobacillus johnsonii (strain CNCM I-12250 / La1 / NCC 533) protein is Glutamate--tRNA ligase.